The sequence spans 365 residues: Sulfotransferase 2B1 (365 aa).

3'-phosphoadenylyl sulfate is bound at residue 70–75 (KSGTTW). 3 residues coordinate substrate: W98, W103, and H125. H125 serves as the catalytic Proton acceptor. 3'-phosphoadenylyl sulfate contacts are provided by residues R147, S155, Y210, 244–249 (STFSAM), and 274–276 (RKG). Residues 303–365 (GMPTFPWDED…ASETPHPRPS (63 aa)) form a disordered region. Acidic residues predominate over residues 309 to 325 (WDEDPEEDGSPDPEPSP). S348 carries the post-translational modification Phosphoserine.

Belongs to the sulfotransferase 1 family. In terms of processing, phosphorylated. In terms of tissue distribution, expressed in the stratum granulosum-stratum corneum junction in the skin (at protein level). Expressed highly in placenta, prostate and trachea and lower expression in the small intestine and lung.

The protein localises to the cytoplasm. Its subcellular location is the cytosol. It is found in the microsome. The protein resides in the nucleus. It catalyses the reaction an alcohol + 3'-phosphoadenylyl sulfate = an alkyl sulfate + adenosine 3',5'-bisphosphate + H(+). The enzyme catalyses 3beta-hydroxyandrost-5-en-17-one + 3'-phosphoadenylyl sulfate = dehydroepiandrosterone 3-sulfate + adenosine 3',5'-bisphosphate + H(+). The catalysed reaction is (24S)-hydroxycholesterol + 3'-phosphoadenylyl sulfate = (24S)-hydroxycholesterol 3-sulfate + adenosine 3',5'-bisphosphate + H(+). It carries out the reaction cholesterol + 3'-phosphoadenylyl sulfate = cholesterol sulfate + adenosine 3',5'-bisphosphate + H(+). It catalyses the reaction pregnenolone + 3'-phosphoadenylyl sulfate = pregnenolone sulfate + adenosine 3',5'-bisphosphate + H(+). In terms of biological role, sulfotransferase that utilizes 3'-phospho-5'-adenylyl sulfate (PAPS) as sulfonate donor to catalyze the sulfate conjugation. Responsible for the sulfation of cholesterol. Catalyzes sulfation of the 3beta-hydroxyl groups of steroids, such as, pregnenolone and dehydroepiandrosterone (DHEA). Preferentially sulfonates cholesterol, while it also has significant activity with pregnenolone and DHEA. Plays a role in epidermal cholesterol metabolism and in the regulation of epidermal proliferation and differentiation. Its function is as follows. Sulfonates pregnenolone but not cholesterol. The chain is Sulfotransferase 2B1 (SULT2B1) from Homo sapiens (Human).